Consider the following 338-residue polypeptide: S-adenosylmethionine:tRNA ribosyltransferase-isomerase (338 aa).

This sequence belongs to the QueA family. As to quaternary structure, monomer.

Its subcellular location is the cytoplasm. The catalysed reaction is 7-aminomethyl-7-carbaguanosine(34) in tRNA + S-adenosyl-L-methionine = epoxyqueuosine(34) in tRNA + adenine + L-methionine + 2 H(+). It functions in the pathway tRNA modification; tRNA-queuosine biosynthesis. Transfers and isomerizes the ribose moiety from AdoMet to the 7-aminomethyl group of 7-deazaguanine (preQ1-tRNA) to give epoxyqueuosine (oQ-tRNA). The sequence is that of S-adenosylmethionine:tRNA ribosyltransferase-isomerase from Francisella philomiragia subsp. philomiragia (strain ATCC 25017 / CCUG 19701 / FSC 153 / O#319-036).